A 1837-amino-acid chain; its full sequence is AF4/FMR2 family member lilli (1837 aa).

9 disordered regions span residues 1 to 25 (MAQQQQQQQHHHHLQHQQQQQQQQQ), 65 to 109 (NLYS…PRRL), 162 to 295 (IQQQ…LHNG), 455 to 592 (QQLP…KKKY), 605 to 712 (TGLL…PGNV), 797 to 852 (PKSQ…LQIP), 868 to 1250 (NNMQ…GGAK), 1267 to 1311 (QQQQ…GLAS), and 1344 to 1466 (APSS…DPML). The segment covering 16–25 (HQQQQQQQQQ) has biased composition (low complexity). Residues 84–109 (REKYERQQGIQSDDRETSLFSEPRRL) are compositionally biased toward basic and acidic residues. 3 stretches are compositionally biased toward low complexity: residues 162 to 179 (IQQQVSSSISSSASVASS), 187 to 200 (QTQQQQQQQQQQQQ), and 247 to 264 (NSNSSSITNNAAASSSSS). A Phosphothreonine modification is found at Thr468. The span at 475–488 (LKIEKNPILEKQDS) shows a compositional bias: basic and acidic residues. Positions 490–500 (LENDLELSESE) are enriched in acidic residues. A phosphoserine mark is found at Ser497 and Ser499. 2 stretches are compositionally biased toward low complexity: residues 509–529 (SPGSSSNGSESDSTESGSESS) and 542–552 (QQQQQTQQQQL). Residues 553–563 (HGHHPQSHHHQ) are compositionally biased toward basic residues. Positions 564-583 (QFLQQQLQRQQQQQQQQQQL) are enriched in low complexity. Gly residues-rich tracts occupy residues 612 to 633 (GGLGSSSGNNSSGGGGGSGNGG) and 641 to 673 (GSMGGSGGSSSSGGASGGGGGGGGSGSSSGIGS). 2 stretches are compositionally biased toward polar residues: residues 678-690 (NKTPSPTDSNKWN) and 698-711 (PTSQTSSESVSPGN). Over residues 815 to 837 (SESATSGSSSSSCSSSDSAASAS) the composition is skewed to low complexity. Residues 868 to 880 (NNMQKSQSMSVTV) are compositionally biased toward polar residues. Basic residues predominate over residues 892–902 (PRQKKPRKKKM). A phosphoserine mark is found at Ser913 and Ser914. 2 stretches are compositionally biased toward low complexity: residues 927 to 951 (VVAQAQAAVVPPPSTNSTTTSATTT) and 961 to 1013 (QQQQ…SSVL). A DNA-binding region (a.T hook) is located at residues 952 to 964 (KKGRGRPRKQQQQ). Phosphoserine is present on residues Ser974 and Ser976. Polar residues predominate over residues 1021–1033 (SQSSSNGNTPTKK). Composition is skewed to low complexity over residues 1034 to 1049 (MSSIPMMPAAAASAAA), 1056 to 1091 (AVAAANAVAASSSSSDEESSSSSCSTSKSSSSSSSS), 1130 to 1139 (GSSSPTSSSS), and 1157 to 1173 (ISNSNSNSNNNVIVNNN). The span at 1174-1184 (LQQQAMPQQSP) shows a compositional bias: polar residues. The segment covering 1189–1212 (LSGGSQQLSSSDSSSSSSGSSSSS) has biased composition (low complexity). Residues 1217-1234 (DAKREKNRERKPKSDKNK) show a composition bias toward basic and acidic residues. Positions 1267–1276 (QQQQQQQQVQ) are enriched in low complexity. A compositionally biased stretch (polar residues) spans 1345–1355 (PSSSNQQNGHL). The segment covering 1373–1386 (KVKHEHHQLHHHSQ) has biased composition (basic residues). 2 stretches are compositionally biased toward basic and acidic residues: residues 1393–1407 (VKPEPELDSLYETKF) and 1416–1432 (FQLKQERDRDRNRERDQ). Ser1517 carries the phosphoserine modification. The span at 1550 to 1560 (AVQTTPPTSVT) shows a compositional bias: polar residues. Disordered regions lie at residues 1550 to 1571 (AVQTTPPTSVTGAGAPASLVSQ) and 1727 to 1756 (GNTPSSISPSNSVGSQGSGSNTPPGKIVPQ). Residues 1727–1747 (GNTPSSISPSNSVGSQGSGSN) show a composition bias toward low complexity.

This sequence belongs to the AF4 family.

Its subcellular location is the nucleus. In terms of biological role, has a role in transcriptional regulation. Acts in parallel with the Ras/MAPK and the PI3K/PKB pathways in the control of cell identity and cellular growth. Essential for regulation of the cytoskeleton and cell growth but not for cell proliferation or growth rate. Required specifically for the microtubule-based basal transport of lipid droplets. Plays a partially redundant function downstream of Raf in cell fate specification in the developing eye. Pair-rule protein that regulates embryonic cellularization, gastrulation and segmentation. The protein is AF4/FMR2 family member lilli of Drosophila willistoni (Fruit fly).